Reading from the N-terminus, the 211-residue chain is MATKQLLRRQIKRVINALDYDIIAAESHTISQAVRSLIASANSRRVACYMSMDKGEVTTGEIIKNLFQDGQEVFLPRCTHTSESKHFKLREDHHPHLIFHRMSSLKMVRDLKPQGPYQLKEPEPHIEESDILDVVLVPGVAFDIKTGARMGHGAGYYDDFFQRYKILHEGQKPLLVGLCLMEQVASPIPLEKHDYSMDCIVCGDGSIHWFQ.

K4 to R8 lines the ATP pocket. Substrate contacts are provided by residues E56 and H152–Y156. ATP contacts are provided by residues G151–D158 and D194.

It belongs to the 5-formyltetrahydrofolate cyclo-ligase family. In terms of processing, N-glycosylated.

Its subcellular location is the mitochondrion. It catalyses the reaction (6S)-5-formyl-5,6,7,8-tetrahydrofolate + ATP = (6R)-5,10-methenyltetrahydrofolate + ADP + phosphate. Functionally, only enzyme known to utilize 5-formyltetrahydrofolate (folinic acid) as substrate. Contributes to tetrahydrofolate metabolism in an alternative way of folate biosynthesis. May regulate carbon flow through the folate-dependent one-carbon metabolic network that supplies carbon for the biosynthesis of purines, thymidine and amino acids. This chain is 5-formyltetrahydrofolate cyclo-ligase (FAU1), found in Saccharomyces cerevisiae (strain ATCC 204508 / S288c) (Baker's yeast).